The primary structure comprises 265 residues: Insulin-like growth factor-binding protein 5 (265 aa).

An N-terminal signal peptide occupies residues Met-1–Ala-21. The IGFBP N-terminal domain maps to Ser-24–Leu-104. 6 cysteine pairs are disulfide-bonded: Cys-28–Cys-54, Cys-31–Cys-56, Cys-39–Cys-57, Cys-46–Cys-60, Cys-68–Cys-81, and Cys-75–Cys-101. The segment covering Ser-111–Asp-121 has biased composition (basic and acidic residues). A disordered region spans residues Ser-111–Gly-137. Residues Met-182–Cys-256 form the Thyroglobulin type-1 domain. Disulfide bonds link Cys-185–Cys-212, Cys-223–Cys-234, and Cys-236–Cys-256.

The protein resides in the secreted. Its function is as follows. IGF-binding proteins prolong the half-life of the IGFs and have been shown to either inhibit or stimulate the growth promoting effects of the IGFs on cell culture. They alter the interaction of IGFs with their cell surface receptors. Promotes anterior neural development by stimulating insulin growth factor (IGF) signaling via IGF receptors. This chain is Insulin-like growth factor-binding protein 5, found in Xenopus laevis (African clawed frog).